The following is a 436-amino-acid chain: sn-glycerol-3-phosphate-binding periplasmic protein UgpB (436 aa).

The first 26 residues, 1 to 26 (MTLKKLSYRLAAASALSFFVTSNAFA), serve as a signal peptide directing secretion. The sn-glycerol 3-phosphate site is built by tyrosine 68, aspartate 92, serine 147, serine 274, glycine 308, tyrosine 347, and arginine 398.

It belongs to the bacterial solute-binding protein 1 family. The complex is composed of two ATP-binding proteins (UgpC), two transmembrane proteins (UgpA and UgpE) and a solute-binding protein (UgpB).

It localises to the periplasm. Its function is as follows. Part of the ABC transporter complex UgpBAEC involved in sn-glycerol-3-phosphate (G3P) import. Binds G3P. This chain is sn-glycerol-3-phosphate-binding periplasmic protein UgpB (ugpB), found in Agrobacterium fabrum (strain C58 / ATCC 33970) (Agrobacterium tumefaciens (strain C58)).